A 324-amino-acid polypeptide reads, in one-letter code: Beta-ketoacyl-[acyl-carrier-protein] synthase III (324 aa).

Residues C111 and H251 contribute to the active site. Positions 252–256 (QANTR) are ACP-binding. N281 is an active-site residue.

The protein belongs to the thiolase-like superfamily. FabH family. Homodimer.

The protein localises to the plastid. The protein resides in the chloroplast. It carries out the reaction malonyl-[ACP] + acetyl-CoA + H(+) = 3-oxobutanoyl-[ACP] + CO2 + CoA. It participates in lipid metabolism; fatty acid biosynthesis. Functionally, catalyzes the condensation reaction of fatty acid synthesis by the addition to an acyl acceptor of two carbons from malonyl-ACP. Catalyzes the first condensation reaction which initiates fatty acid synthesis and may therefore play a role in governing the total rate of fatty acid production. Possesses both acetoacetyl-ACP synthase and acetyl transacylase activities. Its substrate specificity determines the biosynthesis of branched-chain and/or straight-chain of fatty acids. This Pyropia yezoensis (Susabi-nori) protein is Beta-ketoacyl-[acyl-carrier-protein] synthase III.